A 422-amino-acid polypeptide reads, in one-letter code: G-protein coupled receptor 151 protein (422 aa).

Residues 1 to 45 (MGKAMLRAGFADTNSSNMNESFARLHFAGGYLPSDSKDWRTIIPS) are Extracellular-facing. N-linked (GlcNAc...) asparagine glycosylation is found at Asn14 and Asn19. Residues 46–66 (LLMAVCLVGLVGNLCVIGILL) traverse the membrane as a helical segment. Over 67-76 (HGVWKRKPST) the chain is Cytoplasmic. The chain crosses the membrane as a helical span at residues 77–97 (IHSLILNLSLADFSLLLFSAP). Residues 98–123 (VRAAAYSKGVWDLGWFICKSSDWFTH) lie on the Extracellular side of the membrane. Residues Cys115 and Cys191 are joined by a disulfide bond. Residues 124–144 (VCMAAKSLTFVVVAKACFAYA) form a helical membrane-spanning segment. Residues 145-157 (SDPAKQESIHSRT) are Cytoplasmic-facing. A helical membrane pass occupies residues 158-178 (IWSVLAGIWVVASLLPLPEWL). Residues 179–205 (FSTTRRHAGVEMCLVDVPAVAEEFMSM) lie on the Extracellular side of the membrane. A helical transmembrane segment spans residues 206–226 (FGKLYPLLVFCLPLLLAGVYF). The Cytoplasmic portion of the chain corresponds to 227 to 259 (WRAYDQCKTRCTKTRNLRDQMRSKQLTVMLLST). Residues 260-280 (AIISALLWLPEWIAWLWVWHV) traverse the membrane as a helical segment. At 281–290 (KAGGPMPPQG) the chain is on the extracellular side. The helical transmembrane segment at 291-311 (FIALSQVLMFFTSTANPLIFL) threads the bilayer. Over 312–422 (VMSEEFKAGL…HEGQETEGCN (111 aa)) the chain is Cytoplasmic. A disordered region spans residues 339–422 (VQEAPAGNTE…HEGQETEGCN (84 aa)). Basic and acidic residues predominate over residues 366–380 (TDGRGSPDDSKEKSG).

High expression in the brain and lower levels in kidney and liver. In the nervous system expressed specifically in the habenular area (at protein level).

It localises to the cell membrane. Its function is as follows. Proton-sensing G-protein coupled receptor. The chain is G-protein coupled receptor 151 protein (Gpr151) from Mus musculus (Mouse).